The following is a 1408-amino-acid chain: ABC multidrug transporter MDR1 (1408 aa).

Polar residues predominate over residues Ile-79 to Asn-88. Residues Ile-79–Ser-102 form a disordered region. Transmembrane regions (helical) follow at residues Phe-147–Gly-167 and Leu-223–Trp-243. Residues Val-157 to Lys-464 form the ABC transmembrane type-1 1 domain. Asn-244 carries an N-linked (GlcNAc...) asparagine glycan. The next 4 helical transmembrane spans lie at Lys-296–Val-316, Leu-321–Thr-341, Ile-408–Val-428, and Gly-436–Ala-456. The region spanning Ile-499–Asn-744 is the ABC transporter 1 domain. Gly-534–Ser-541 is an ATP binding site. Asn-606 is a glycosylation site (N-linked (GlcNAc...) asparagine). The next 2 helical transmembrane spans lie at Ile-838–Phe-858 and Leu-882–Phe-902. Residues Ile-838 to Lys-1125 enclose the ABC transmembrane type-1 2 domain. Asn-934 is a glycosylation site (N-linked (GlcNAc...) asparagine). The next 4 membrane-spanning stretches (helical) occupy residues Gly-952 to Cys-972, Leu-981 to Ile-999, Gly-1072 to Ala-1092, and Phe-1099 to Phe-1119. Asn-1127 and Asn-1182 each carry an N-linked (GlcNAc...) asparagine glycan. Positions Val-1162 to Met-1402 constitute an ABC transporter 2 domain. An ATP-binding site is contributed by Gly-1197 to Ser-1204. An N-linked (GlcNAc...) asparagine glycan is attached at Asn-1404.

The protein belongs to the ABC transporter superfamily. ABCB family. Multidrug resistance exporter (TC 3.A.1.201) subfamily.

The protein resides in the cell membrane. The catalysed reaction is itraconazole(in) + ATP + H2O = itraconazole(out) + ADP + phosphate + H(+). The enzyme catalyses voriconazole(in) + ATP + H2O = voriconazole(out) + ADP + phosphate + H(+). It catalyses the reaction fluconazole(in) + ATP + H2O = fluconazole(out) + ADP + phosphate + H(+). Its function is as follows. Pleiotropic ABC efflux transporter that confers resistance to structurally and functionally unrelated compounds including azoles such as fluconazole (FLC), itraconazole (ITC), posaconazole (POS), and voriconazole (VRC). This chain is ABC multidrug transporter MDR1, found in Cryptococcus neoformans var. grubii serotype A (strain H99 / ATCC 208821 / CBS 10515 / FGSC 9487) (Filobasidiella neoformans var. grubii).